The primary structure comprises 268 residues: MNTFSPQQHTENRLRWSPALKGLPPLVSIAFPALIYLIFGKDRFEENPFLKFITLLLPLSYSAAHHLFLVHTSWNRSNKPEGILHSISYYTLNLLLLTFATISILSIIAFPFDEWEGDDSYYCSIILPSFFMPSVYLLSTSCCLVPGRIGFTDTGINVPIGMSILLCPAVSFVLVCKESEYHLLPAILFPILILIRLFKEKCFPSEKNALPTAPWRTAIFVFILILSIFIYTLMARVFVISLYDYLSRTVFYSNTAPVLRPDRILSLL.

The protein belongs to the UPF0328 family.

This is UPF0328 protein ECU05_1640/ECU11_0090 from Encephalitozoon cuniculi (strain GB-M1) (Microsporidian parasite).